The following is a 513-amino-acid chain: Putative GMP synthase [glutamine-hydrolyzing] (513 aa).

Positions 8 to 198 (MIVVLDFGGQ…AFAVCGCEGN (191 aa)) constitute a Glutamine amidotransferase type-1 domain. Residue Cys-85 is the Nucleophile of the active site. Residue Glu-174 is part of the active site. One can recognise a GMPS ATP-PPase domain in the interval 199 to 388 (WSMENFIELE…LGIPDEVVWR (190 aa)). Position 226-232 (226-232 (SGGVDSS)) interacts with ATP.

Homodimer.

It catalyses the reaction XMP + L-glutamine + ATP + H2O = GMP + L-glutamate + AMP + diphosphate + 2 H(+). Its pathway is purine metabolism; GMP biosynthesis; GMP from XMP (L-Gln route): step 1/1. Functionally, catalyzes the synthesis of GMP from XMP. This is Putative GMP synthase [glutamine-hydrolyzing] (guaA) from Halalkalibacterium halodurans (strain ATCC BAA-125 / DSM 18197 / FERM 7344 / JCM 9153 / C-125) (Bacillus halodurans).